Consider the following 217-residue polypeptide: Flagellar L-ring protein 1 (217 aa).

The N-terminal stretch at 1–16 is a signal peptide; it reads MTLARLAPLAALLLAA. The N-palmitoyl cysteine moiety is linked to residue C17. C17 carries S-diacylglycerol cysteine lipidation.

It belongs to the FlgH family. The basal body constitutes a major portion of the flagellar organelle and consists of four rings (L,P,S, and M) mounted on a central rod.

It is found in the cell outer membrane. The protein localises to the bacterial flagellum basal body. Functionally, assembles around the rod to form the L-ring and probably protects the motor/basal body from shearing forces during rotation. In Chromobacterium violaceum (strain ATCC 12472 / DSM 30191 / JCM 1249 / CCUG 213 / NBRC 12614 / NCIMB 9131 / NCTC 9757 / MK), this protein is Flagellar L-ring protein 1.